Reading from the N-terminus, the 515-residue chain is ATP synthase subunit alpha (515 aa).

Residue 171–178 (GDRQTGKT) coordinates ATP.

It belongs to the ATPase alpha/beta chains family. F-type ATPases have 2 components, CF(1) - the catalytic core - and CF(0) - the membrane proton channel. CF(1) has five subunits: alpha(3), beta(3), gamma(1), delta(1), epsilon(1). CF(0) has three main subunits: a(1), b(2) and c(9-12). The alpha and beta chains form an alternating ring which encloses part of the gamma chain. CF(1) is attached to CF(0) by a central stalk formed by the gamma and epsilon chains, while a peripheral stalk is formed by the delta and b chains.

Its subcellular location is the cell membrane. It carries out the reaction ATP + H2O + 4 H(+)(in) = ADP + phosphate + 5 H(+)(out). In terms of biological role, produces ATP from ADP in the presence of a proton gradient across the membrane. The alpha chain is a regulatory subunit. The sequence is that of ATP synthase subunit alpha from Stenotrophomonas maltophilia (strain K279a).